The chain runs to 227 residues: UPF0758 protein CPE2144 (227 aa).

In terms of domain architecture, MPN spans 105–227 (KISKPSDVAK…FISLKEKDIL (123 aa)). Histidine 176, histidine 178, and aspartate 189 together coordinate Zn(2+). The short motif at 176–189 (HNHPSGDPTPSRDD) is the JAMM motif element.

It belongs to the UPF0758 family.

The chain is UPF0758 protein CPE2144 from Clostridium perfringens (strain 13 / Type A).